Reading from the N-terminus, the 267-residue chain is Phosphate import ATP-binding protein PstB (267 aa).

The region spanning 21–262 is the ABC transporter domain; the sequence is VAARNLDFYY…PSKQQTEDYI (242 aa). 53-60 contacts ATP; it reads GPSGCGKS.

It belongs to the ABC transporter superfamily. Phosphate importer (TC 3.A.1.7) family. In terms of assembly, the complex is composed of two ATP-binding proteins (PstB), two transmembrane proteins (PstC and PstA) and a solute-binding protein (PstS).

The protein resides in the cell inner membrane. The catalysed reaction is phosphate(out) + ATP + H2O = ADP + 2 phosphate(in) + H(+). In terms of biological role, part of the ABC transporter complex PstSACB involved in phosphate import. Responsible for energy coupling to the transport system. This chain is Phosphate import ATP-binding protein PstB, found in Xanthomonas axonopodis pv. citri (strain 306).